The primary structure comprises 556 residues: Putative solute carrier family 22 member 31 (556 aa).

Residues 1 to 23 lie on the Cytoplasmic side of the membrane; the sequence is MEQEARVLRAAGGFGRARRLLAS. A helical transmembrane segment spans residues 24–44; the sequence is ASWVPCIVLGLVLSSEELLTA. The Extracellular segment spans residues 45-128; it reads QPAPHCRPDP…WNLVCGDGWK (84 aa). A helical transmembrane segment spans residues 129–149; the sequence is VPLEQVSHLLGWLLGCVILGA. At 150–157 the chain is on the cytoplasmic side; sequence GCDRFGRR. Residues 158 to 178 form a helical membrane-spanning segment; the sequence is AVFVASLVLTTGLGASEALAA. Topologically, residues 179–182 are extracellular; the sequence is SFPT. The chain crosses the membrane as a helical span at residues 183–203; the sequence is LLVLRLLHGGTLAGALLALYL. Residues 204 to 218 are Cytoplasmic-facing; it reads ARLELCDPPHRLAFS. The chain crosses the membrane as a helical span at residues 219-239; it reads MGAGLFSVVGTLLLPGLAALV. Residues 240 to 246 are Extracellular-facing; the sequence is QDWRLLQ. Residues 247–267 traverse the membrane as a helical segment; sequence GLGALMSGLLLLFWGFPALFP. Topologically, residues 268-339 are cytoplasmic; sequence ESPCWLLATG…LRTRVTWRNG (72 aa). A helical transmembrane segment spans residues 340–357; that stretch reads LILGFSSLVGGGIRASFR. Topologically, residues 358-366 are extracellular; it reads RSLAPQVPT. A helical transmembrane segment spans residues 367–387; that stretch reads FYLPYFLEAGLEAAALVFLLL. At 388-395 the chain is on the cytoplasmic side; sequence TADCCGRR. A helical membrane pass occupies residues 396-416; it reads PVLLLGTMVTGLASLLLLAGA. The Extracellular segment spans residues 417 to 420; sequence QYLP. Residues 421–441 form a helical membrane-spanning segment; that stretch reads GWTVLFLSVLGLLASRAVSAL. Topologically, residues 442–448 are cytoplasmic; sequence SSLFAAE. Residues 449-469 traverse the membrane as a helical segment; the sequence is VFPTVIRGAGLGLVLGAGFLG. Over 470-483 the chain is Extracellular; it reads QAAGPLDTLHGRQG. Residues 484–504 traverse the membrane as a helical segment; sequence FFLQQVVFASLAVLALLCVLL. Residues 505 to 556 are Cytoplasmic-facing; it reads LPESRSRGLPQSLQDADRLRRSPLLRGRPRQDHLPLLPPSNSYWAGHTPEQH. The interval 524–556 is disordered; that stretch reads RRSPLLRGRPRQDHLPLLPPSNSYWAGHTPEQH.

It belongs to the major facilitator (TC 2.A.1) superfamily. Organic cation transporter (TC 2.A.1.19) family.

Its subcellular location is the membrane. Its function is as follows. Organic anion transporter that mediates the uptake of ions. The sequence is that of Putative solute carrier family 22 member 31 from Homo sapiens (Human).